The following is a 250-amino-acid chain: 2,3-bisphosphoglycerate-dependent phosphoglycerate mutase (250 aa).

Residues 8–15, 21–22, Arg-60, 87–90, Lys-98, 114–115, and 183–184 each bind substrate; these read RHGESQWN, TG, ERHY, RR, and GN. His-9 serves as the catalytic Tele-phosphohistidine intermediate. The active-site Proton donor/acceptor is Glu-87.

Belongs to the phosphoglycerate mutase family. BPG-dependent PGAM subfamily. In terms of assembly, homodimer.

It catalyses the reaction (2R)-2-phosphoglycerate = (2R)-3-phosphoglycerate. It participates in carbohydrate degradation; glycolysis; pyruvate from D-glyceraldehyde 3-phosphate: step 3/5. Functionally, catalyzes the interconversion of 2-phosphoglycerate and 3-phosphoglycerate. The polypeptide is 2,3-bisphosphoglycerate-dependent phosphoglycerate mutase (Bordetella pertussis (strain Tohama I / ATCC BAA-589 / NCTC 13251)).